We begin with the raw amino-acid sequence, 532 residues long: MDITTNDLNHDDHHTPHGWKRWLFSTNHKDIGIMYIIFAIFAGIVGGLFSLLFRLELAMPGGTFLNHDFQLYNVLITAHAVIMVFFMIMPALFGGFGNYFVPLLIGAPDMAFPRLNNISFWLLVPAFILLMGSAFVDGGPGTGWTLYPPLSSISGHPGAAVDMAIFSLHLTGLSSILGSINLIVTIFNMRAPGMGLFKMPLFVWSILVTAFLIILAMPVLGGAITMLLTDRNFGTTFFKTDGGGDPVLFQHLFWFFGHPEVYIVILPGFGIVSQVISTFSRKPIFGYQGMVGAMVIIGFVGFIVWAHHMFTVGLSYNALIYFTAGTMIIAIPTGIKIFSWIATMWGGSITFPTPMLFSIGFIILFTIGGVTGIILSNSALDRVLHDTYYVVAHFHYTMSLGALFTAFAGFYYWFGKISGKQYPEILGKIHFWITFVGVNLTFFPQHFLGLAGMPRRIPDYPEAFAGWNMVSSIGAGISMAAALYFVFIVFYTLKYGKDCPNNPWGDGADTLEWTLTSPPPFHTFETPPHIEE.

A run of 8 helical transmembrane segments spans residues I33–F53, V74–G94, G95–L115, I118–G138, M163–I183, P200–L220, L252–V272, and I284–V304. Position 79 (H79) interacts with Fe(II)-heme a. Positions 258 and 262 each coordinate Cu cation. Cu cation contacts are provided by H307 and H308. Helical transmembrane passes span A318–F338 and M355–L375. H393 contributes to the heme a3 binding site. Transmembrane regions (helical) follow at residues F394–F414, F431–A451, and I473–L493. Residue H395 participates in Fe(II)-heme a binding.

This sequence belongs to the heme-copper respiratory oxidase family.

It is found in the cell membrane. The enzyme catalyses 4 Fe(II)-[cytochrome c] + O2 + 8 H(+)(in) = 4 Fe(III)-[cytochrome c] + 2 H2O + 4 H(+)(out). Its pathway is energy metabolism; oxidative phosphorylation. Its function is as follows. Cytochrome c oxidase is the component of the respiratory chain that catalyzes the reduction of oxygen to water. Subunits 1-3 form the functional core of the enzyme complex. CO I is the catalytic subunit of the enzyme. Electrons originating in cytochrome c are transferred via the copper A center of subunit 2 and heme A of subunit 1 to the bimetallic center formed by heme A3 and copper B. This Rickettsia bellii (strain RML369-C) protein is Probable cytochrome c oxidase subunit 1 (ctaD).